Here is a 444-residue protein sequence, read N- to C-terminus: 23S rRNA (uracil(1939)-C(5))-methyltransferase RlmD (444 aa).

A TRAM domain is found at 5-64 (KPKLNLTSQTARIVNLSHDGRGIARVNGKATFIQGALPGEVVEFQYTRVKKDFDEGKLLS). [4Fe-4S] cluster contacts are provided by C77, C83, C86, and C166. S-adenosyl-L-methionine-binding residues include Q276, F305, N310, E326, N353, and D374. C400 (nucleophile) is an active-site residue.

Belongs to the class I-like SAM-binding methyltransferase superfamily. RNA M5U methyltransferase family. RlmD subfamily.

The catalysed reaction is uridine(1939) in 23S rRNA + S-adenosyl-L-methionine = 5-methyluridine(1939) in 23S rRNA + S-adenosyl-L-homocysteine + H(+). Functionally, catalyzes the formation of 5-methyl-uridine at position 1939 (m5U1939) in 23S rRNA. The sequence is that of 23S rRNA (uracil(1939)-C(5))-methyltransferase RlmD from Legionella pneumophila (strain Paris).